A 299-amino-acid chain; its full sequence is Tyrosine recombinase XerC (299 aa).

The region spanning 2 to 88 (SALQPLIDTY…ALRSFLDYLV (87 aa)) is the Core-binding (CB) domain. Residues 109 to 289 (PLPKNVSVDD…DFQHLSKIYD (181 aa)) enclose the Tyr recombinase domain. Active-site residues include Arg148, Lys172, His241, Arg244, and His267. Tyr276 acts as the O-(3'-phospho-DNA)-tyrosine intermediate in catalysis.

This sequence belongs to the 'phage' integrase family. XerC subfamily. Forms a cyclic heterotetrameric complex composed of two molecules of XerC and two molecules of XerD.

Its subcellular location is the cytoplasm. Its function is as follows. Site-specific tyrosine recombinase, which acts by catalyzing the cutting and rejoining of the recombining DNA molecules. The XerC-XerD complex is essential to convert dimers of the bacterial chromosome into monomers to permit their segregation at cell division. It also contributes to the segregational stability of plasmids. The protein is Tyrosine recombinase XerC of Psychromonas ingrahamii (strain DSM 17664 / CCUG 51855 / 37).